Here is a 20-residue protein sequence, read N- to C-terminus: Putative 60 kDa spermidine-binding protein (20 aa).

The segment at 1-20 (SXAAVVEPPETSQNRIAKGE) is disordered. A compositionally biased stretch (polar residues) spans 10 to 20 (ETSQNRIAKGE).

In terms of assembly, dimer of 18 kDa and 60 kDa subunit.

It is found in the microsome membrane. The protein localises to the endoplasmic reticulum membrane. May have spermidine-binding activity. The polypeptide is Putative 60 kDa spermidine-binding protein (Zea mays (Maize)).